Here is a 183-residue protein sequence, read N- to C-terminus: ATP synthase subunit b, chloroplastic (183 aa).

The chain crosses the membrane as a helical span at residues 28 to 48 (DIFEANVINILLLLFGLIYVL).

It belongs to the ATPase B chain family. F-type ATPases have 2 components, F(1) - the catalytic core - and F(0) - the membrane proton channel. F(1) has five subunits: alpha(3), beta(3), gamma(1), delta(1), epsilon(1). F(0) has four main subunits: a(1), b(1), b'(1) and c(10-14). The alpha and beta chains form an alternating ring which encloses part of the gamma chain. F(1) is attached to F(0) by a central stalk formed by the gamma and epsilon chains, while a peripheral stalk is formed by the delta, b and b' chains.

Its subcellular location is the plastid. It localises to the chloroplast thylakoid membrane. Functionally, f(1)F(0) ATP synthase produces ATP from ADP in the presence of a proton or sodium gradient. F-type ATPases consist of two structural domains, F(1) containing the extramembraneous catalytic core and F(0) containing the membrane proton channel, linked together by a central stalk and a peripheral stalk. During catalysis, ATP synthesis in the catalytic domain of F(1) is coupled via a rotary mechanism of the central stalk subunits to proton translocation. Component of the F(0) channel, it forms part of the peripheral stalk, linking F(1) to F(0). The protein is ATP synthase subunit b, chloroplastic of Porphyra purpurea (Red seaweed).